A 105-amino-acid polypeptide reads, in one-letter code: Small ribosomal subunit protein uS10 (105 aa).

This sequence belongs to the universal ribosomal protein uS10 family. As to quaternary structure, part of the 30S ribosomal subunit.

Involved in the binding of tRNA to the ribosomes. The chain is Small ribosomal subunit protein uS10 from Crocosphaera subtropica (strain ATCC 51142 / BH68) (Cyanothece sp. (strain ATCC 51142)).